The primary structure comprises 346 residues: Phosphoribosylformylglycinamidine cyclo-ligase (346 aa).

This sequence belongs to the AIR synthase family.

It localises to the cytoplasm. It catalyses the reaction 2-formamido-N(1)-(5-O-phospho-beta-D-ribosyl)acetamidine + ATP = 5-amino-1-(5-phospho-beta-D-ribosyl)imidazole + ADP + phosphate + H(+). The protein operates within purine metabolism; IMP biosynthesis via de novo pathway; 5-amino-1-(5-phospho-D-ribosyl)imidazole from N(2)-formyl-N(1)-(5-phospho-D-ribosyl)glycinamide: step 2/2. In Proteus mirabilis (strain HI4320), this protein is Phosphoribosylformylglycinamidine cyclo-ligase.